A 417-amino-acid chain; its full sequence is uncharacterized protein (417 aa).

The next 9 helical transmembrane spans lie at 1–21, 32–52, 96–116, 168–188, 192–212, 261–281, 286–306, 351–371, and 392–412; these read MSVLSSILGMVVLIAIAVLLS, VVGALAIQVGFAALILYVPAG, VLPIIVFFSGLISVLYYLGIM, LFAIMVGGTASIAGSVMAGYA, VPLTYLIAASFMAAPAGLLFA, IAFVGLIALINGILSGVGGWF, LTLQSIFGLIFKPLAYLIGVT, AIITFALCGFANFSSIAILIG, and VIAGTLANLMSATIAGLFIGL.

This sequence belongs to the concentrative nucleoside transporter (CNT) (TC 2.A.41) family.

Its subcellular location is the cell inner membrane. This is an uncharacterized protein from Haemophilus influenzae (strain ATCC 51907 / DSM 11121 / KW20 / Rd).